Reading from the N-terminus, the 167-residue chain is Adenylylsulfate reductase subunit beta (167 aa).

4Fe-4S ferredoxin-type domains follow at residues 1-35 (MPTF…LDPE) and 38-67 (KAFN…ARPY). [4Fe-4S] cluster is bound by residues C10, C13, C21, C25, C47, C50, C53, and C57.

In terms of assembly, heterodimer composed of AprA and AprB. The heterodimers can dimerize to form heterotetramers. [4Fe-4S] cluster is required as a cofactor.

It is found in the cytoplasm. Its function is as follows. Iron-sulfur cluster subunit of the adenylylsulfate reductase which catalyzes reversibly the reduction of adenosine 5'-phosphosulfate (APS) to sulfite and AMP during dissimilatory sulfate reduction. The iron-sulfur cluster 2 is thought to accept electrons from a still unknown electron donor and transfer electrons to the iron-sulfur cluster 1 of this protein and then onto the FAD of AprA. This is Adenylylsulfate reductase subunit beta from Megalodesulfovibrio gigas (strain ATCC 19364 / DSM 1382 / NCIMB 9332 / VKM B-1759) (Desulfovibrio gigas).